The primary structure comprises 415 residues: Probable G-protein coupled receptor 19 (415 aa).

The Extracellular portion of the chain corresponds to 1–69; it reads MVFAHRMDNS…LKPGEVATAS (69 aa). Residues asparagine 25 and asparagine 52 are each glycosylated (N-linked (GlcNAc...) asparagine). Residues 70 to 90 form a helical membrane-spanning segment; sequence IFFGILWLFSIFGNSLVCLVI. Over 91 to 102 the chain is Cytoplasmic; sequence HRSRRTQSTTNY. A helical transmembrane segment spans residues 103–123; that stretch reads FVVSMACADLLISVASTPFVL. Residues 124–143 lie on the Extracellular side of the membrane; that stretch reads LQFTTGRWTLGSATCKVVRY. Cysteine 138 and cysteine 210 are oxidised to a cystine. Residues 144-161 form a helical membrane-spanning segment; it reads FQYLTPGVQIYVLLSICI. The Cytoplasmic portion of the chain corresponds to 162–182; the sequence is DRFYTIVYPLSFKVSREKAKK. A helical transmembrane segment spans residues 183-203; sequence MIAASWVFDAGFVTPVLFFYG. The Extracellular segment spans residues 204–221; it reads SNWDSHCNYFLPSSWEGT. The chain crosses the membrane as a helical span at residues 222–242; that stretch reads AYTVIHFLVGFVIPSVLIILF. The Cytoplasmic portion of the chain corresponds to 243 to 277; the sequence is YQKVIKYIWRIGTDGRTVRRTMNIVPRTKVKTIKM. A helical membrane pass occupies residues 278 to 298; it reads FLILNLLFLLSWLPFHVAQLW. Residues 299–309 are Extracellular-facing; it reads HPHEQDYKKSS. Residues 310–325 form a helical membrane-spanning segment; the sequence is LVFTAITWISFSSSAS. The Cytoplasmic portion of the chain corresponds to 326 to 415; that stretch reads KPTLYSIYNA…INSNPPNTFV (90 aa).

It belongs to the G-protein coupled receptor 1 family. Abundant expression in the brain.

The protein localises to the cell membrane. Functionally, G-protein coupled receptor that plays a role in the regulation of circadian rhythms and energy metabolism. Participates in maintaining proper circadian gene expression in the suprachiasmatic nucleus (SCN), the locus of the master circadian clock in the brain. May function as a coordinator of aging-associated metabolic dysfunction, stress response, DNA integrity management, and eventual senescence. Upon binding to adropin, modulates mitochondrial energy metabolism via the p44/42-PDK4 signaling pathway, influencing pyruvate dehydrogenase activity. In Homo sapiens (Human), this protein is Probable G-protein coupled receptor 19 (GPR19).